The sequence spans 308 residues: Phenylcoumaran benzylic ether reductase Betv6 (308 aa).

NADP(+) contacts are provided by residues 11 to 17, arginine 36, and lysine 45; that span reads GGTGYIG. Residue lysine 133 is the Proton acceptor of the active site. Arginine 137 contacts NADP(+).

The protein belongs to the NmrA-type oxidoreductase family. Isoflavone reductase subfamily.

The catalysed reaction is (-)-dehydrodiconiferyl alcohol + NADPH + H(+) = (S)-isodihydrodehydrodiconiferyl alcohol + NADP(+). It carries out the reaction (+)-dehydrodiconiferyl alcohol + NADPH + H(+) = (R)-isodihydrodehydrodiconiferyl alcohol + NADP(+). Its function is as follows. Oxidoreductase involved in lignan biosynthesis. Catalyzes the NADPH-dependent reduction of phenylcoumaran benzylic ethers. Converts dehydrodiconiferyl alcohol (DDC) to isodihydrodehydrodiconiferyl alcohol (IDDDC). The sequence is that of Phenylcoumaran benzylic ether reductase Betv6 from Betula pendula (European white birch).